The chain runs to 489 residues: Transmembrane protein 161A (489 aa).

The first 23 residues, 1-23, serve as a signal peptide directing secretion; the sequence is MAVMGIQMVVTLLVASLMQRVSP. Residues 24-98 are Extracellular-facing; sequence HYSFGRWLLC…INTMDALVLR (75 aa). An N-linked (GlcNAc...) asparagine glycan is attached at N34. A helical membrane pass occupies residues 99-119; sequence YFLEYQWFIDFALYSTIIYLF. Residues 120–134 are Cytoplasmic-facing; sequence TEAYYCVVDAQNEIN. The chain crosses the membrane as a helical span at residues 135–155; that stretch reads IGVLWCLMSIIFSIKVLFTVM. Residues 156–166 are Extracellular-facing; it reads KHYFRSEEGGE. Residues 167–187 form a helical membrane-spanning segment; sequence RSVCMTFAFFFLLIAMIVTIV. Topologically, residues 188–224 are cytoplasmic; it reads RDEYLEFGLEPGLASVCHNLENFLAQQGWQWSMPFVK. Residues 225-245 traverse the membrane as a helical segment; that stretch reads LAFKIALVALCAFLGGCLTFP. Residues 246 to 264 lie on the Extracellular side of the membrane; the sequence is GLRLAQTHLDALKMAADRP. A helical membrane pass occupies residues 265–285; sequence MLQLLLHMSFLPPVIVVVLWI. The Cytoplasmic segment spans residues 286-304; it reads RPITRDFLLNAPMGKESVE. Residues 305 to 325 form a helical membrane-spanning segment; that stretch reads LMSNSAYNTFRLWIIVLLCLL. The Extracellular portion of the chain corresponds to 326 to 370; the sequence is RFCLTRFHLQAYLCLADRWVEQMKREAGRISMLEIQRKISRIFCY. Residues 371–391 traverse the membrane as a helical segment; sequence LTVVALQYLAPVILTFHCVFM. At 392 to 459 the chain is on the cytoplasmic side; it reads LKSLGDYSWG…GLFTPLFFRG (68 aa). The tract at residues 413–432 is disordered; the sequence is VDSSPVQSHSPTSEEEEDTE. A helical membrane pass occupies residues 460–480; sequence IFSFLTWWVSVCQIITSLFGL. At 481-489 the chain is on the extracellular side; that stretch reads YFHQYLGAS.

This sequence belongs to the TMEM161 family.

The protein resides in the membrane. May play a role in protection against oxidative stress. In Xenopus laevis (African clawed frog), this protein is Transmembrane protein 161A (tmem161a).